The chain runs to 297 residues: MVTTVQDLAEQLRQAVESSNEQMIAGLASAYSGKEREKVLRAYLSATGTTAADAIRKALKNGPTENLLAYLWDKPGDVRAKLIRNALSGKNDEAALIDLVIHCSSEDWYNTCTEYTTDYKRVLNDDLLSDIGTKEQWTKVFKHWILHKRSDRFDIDGDEKRLVTAIGKKDYDTIAEMLGTTSVSEYANIVRRAEVTLGKTIDQALSAVWSKQDLAVLLAAHYELLHPARLAFHLLKQALDGKKPDEARIIRITALTFDTCLAVKYAASEAGYDIGSAFAKALDKRLAPLIKILWRVM.

4 Annexin repeats span residues 3-72 (TTVQ…AYLW), 74-146 (KPGD…HWIL), 153-222 (FDID…AAHY), and 226-295 (HPAR…ILWR).

The protein belongs to the annexin family. Giardin subunit alpha subfamily.

Its subcellular location is the cytoplasm. The protein localises to the cytoskeleton. In terms of biological role, giardins are involved in parasite attachment to the intestinal mucosa and in the cytoskeletal disassembly and reassembly that marks the transition from infectious trophozoite to transmissible cyst. They may interact with other cytoskeletal proteins such as microtubules in the microribbons or crossbridges, to maintain the integrity of the ventral disk. The protein is Giardin subunit alpha-6 of Giardia intestinalis (Giardia lamblia).